Reading from the N-terminus, the 123-residue chain is MHELSYATSIVNAIMEHITNMEQANKVKKVSKINLEIGELTFINFEQLKFAFEVASEGTLCKDAKLEAEFLKPHIACNNCGYRGELTANDEFEVKCPECGSLSLKISGGKEFNIKNAILESDE.

His2 is a binding site for Ni(2+). Zn(2+) contacts are provided by Cys77, Cys80, Cys96, and Cys99.

The protein belongs to the HypA/HybF family.

Involved in the maturation of [NiFe] hydrogenases. Required for nickel insertion into the metal center of the hydrogenase. This chain is Hydrogenase maturation factor HypA, found in Methanococcus aeolicus (strain ATCC BAA-1280 / DSM 17508 / OCM 812 / Nankai-3).